We begin with the raw amino-acid sequence, 94 residues long: Co-chaperonin GroES (94 aa).

The protein belongs to the GroES chaperonin family. As to quaternary structure, heptamer of 7 subunits arranged in a ring. Interacts with the chaperonin GroEL.

It localises to the cytoplasm. In terms of biological role, together with the chaperonin GroEL, plays an essential role in assisting protein folding. The GroEL-GroES system forms a nano-cage that allows encapsulation of the non-native substrate proteins and provides a physical environment optimized to promote and accelerate protein folding. GroES binds to the apical surface of the GroEL ring, thereby capping the opening of the GroEL channel. The protein is Co-chaperonin GroES of Streptococcus agalactiae.